Reading from the N-terminus, the 179-residue chain is Cell division protein SepF (179 aa).

The tract at residues 18–55 (EDSSLPYEKRDEPVFTPVNSSQEPALPMNQPSQSAGTK) is disordered. The span at 34–55 (PVNSSQEPALPMNQPSQSAGTK) shows a compositional bias: polar residues.

The protein belongs to the SepF family. Homodimer. Interacts with FtsZ.

The protein resides in the cytoplasm. Cell division protein that is part of the divisome complex and is recruited early to the Z-ring. Probably stimulates Z-ring formation, perhaps through the cross-linking of FtsZ protofilaments. Its function overlaps with FtsA. This Streptococcus pneumoniae (strain ATCC 700669 / Spain 23F-1) protein is Cell division protein SepF.